We begin with the raw amino-acid sequence, 365 residues long: 2-aminoethylphosphonate--pyruvate transaminase (365 aa).

Position 194 is an N6-(pyridoxal phosphate)lysine (Lys-194).

It belongs to the class-V pyridoxal-phosphate-dependent aminotransferase family. PhnW subfamily. As to quaternary structure, homodimer. The cofactor is pyridoxal 5'-phosphate.

It carries out the reaction (2-aminoethyl)phosphonate + pyruvate = phosphonoacetaldehyde + L-alanine. Involved in phosphonate degradation. This chain is 2-aminoethylphosphonate--pyruvate transaminase, found in Bacillus thuringiensis (strain Al Hakam).